We begin with the raw amino-acid sequence, 72 residues long: AEKLEESSAEAKALSYVHDATTSGHDSYQEGQKCINCLLYTDPSQEEWGGCAVFPGKLVNANGWCTAYVARG.

Residue A1 is modified to N-carbamoylalanine; partial. Residues C34, C37, C51, and C65 each coordinate [4Fe-4S] cluster.

The protein belongs to the high-potential iron-sulfur protein (HiPIP) family. Homodimer.

Its function is as follows. Specific class of high-redox-potential 4Fe-4S ferredoxins. Functions in anaerobic electron transport in most purple and in some other photosynthetic bacteria and in at least one genus (Paracoccus) of halophilic, denitrifying bacteria. This is High-potential iron-sulfur protein isozyme 1 from Ectothiorhodospira mobilis.